We begin with the raw amino-acid sequence, 481 residues long: Probable glycine dehydrogenase (decarboxylating) subunit 2 (481 aa).

Position 265 is an N6-(pyridoxal phosphate)lysine (Lys-265).

This sequence belongs to the GcvP family. C-terminal subunit subfamily. In terms of assembly, the glycine cleavage system is composed of four proteins: P, T, L and H. In this organism, the P 'protein' is a heterodimer of two subunits. Requires pyridoxal 5'-phosphate as cofactor.

It carries out the reaction N(6)-[(R)-lipoyl]-L-lysyl-[glycine-cleavage complex H protein] + glycine + H(+) = N(6)-[(R)-S(8)-aminomethyldihydrolipoyl]-L-lysyl-[glycine-cleavage complex H protein] + CO2. The glycine cleavage system catalyzes the degradation of glycine. The P protein binds the alpha-amino group of glycine through its pyridoxal phosphate cofactor; CO(2) is released and the remaining methylamine moiety is then transferred to the lipoamide cofactor of the H protein. The sequence is that of Probable glycine dehydrogenase (decarboxylating) subunit 2 from Thermosipho melanesiensis (strain DSM 12029 / CIP 104789 / BI429).